Reading from the N-terminus, the 358-residue chain is Myb family transcription factor APL (358 aa).

In terms of domain architecture, HTH myb-type spans 31–91; sequence TDPKPRLRWT…HLQKFRLGKQ (61 aa). Positions 62–87 form a DNA-binding region, H-T-H motif; it reads PKTIMRVMGVKGLTLYHLKSHLQKFR. A coiled-coil region spans residues 125–145; the sequence is RNMNEMQMEVQRRLHEQLEVQ. The LHEQLE motif lies at 138 to 143; the sequence is LHEQLE. A disordered region spans residues 313-358; sequence RKSGLSGDEGNNGGKLLERPSPRRSPLSPMMNPNGGLIQGRNSPFG.

The protein belongs to the MYB-CC family. As to expression, expressed in shoots and roots, specifically in the developing protophloem sieve elements. Detected in phloem and/or cambium. Expressed in the phloem tissues of various organs, including leaves and cotyledons, during vegetative growth.

Its subcellular location is the nucleus. Transcription factor required for phloem identity. Has a dual role both in promoting phloem differentiation and in repressing xylem differentiation during vascular development. Regulates the expression of the transcription factor NAC045 (AC A4VCM0). May activate the transcription of specific genes involved in phosphate uptake or assimilation. Promotes flowering through transcriptional activation of both FT and its transport machinery component, FTIP1. The sequence is that of Myb family transcription factor APL from Arabidopsis thaliana (Mouse-ear cress).